Here is a 207-residue protein sequence, read N- to C-terminus: Dephospho-CoA kinase (207 aa).

A DPCK domain is found at 10–207 (ILGLTGGIGS…FYLTLRGGQS (198 aa)). An ATP-binding site is contributed by 18–23 (GSGKSA).

Belongs to the CoaE family.

The protein localises to the cytoplasm. The catalysed reaction is 3'-dephospho-CoA + ATP = ADP + CoA + H(+). It participates in cofactor biosynthesis; coenzyme A biosynthesis; CoA from (R)-pantothenate: step 5/5. Functionally, catalyzes the phosphorylation of the 3'-hydroxyl group of dephosphocoenzyme A to form coenzyme A. This Pseudomonas syringae pv. syringae (strain B728a) protein is Dephospho-CoA kinase.